Consider the following 570-residue polypeptide: Sulfite reductase [NADPH] hemoprotein beta-component (570 aa).

[4Fe-4S] cluster is bound by residues C434, C440, C479, and C483. Position 483 (C483) interacts with siroheme.

Belongs to the nitrite and sulfite reductase 4Fe-4S domain family. In terms of assembly, alpha(8)-beta(8). The alpha component is a flavoprotein, the beta component is a hemoprotein. Requires siroheme as cofactor. [4Fe-4S] cluster serves as cofactor.

It catalyses the reaction hydrogen sulfide + 3 NADP(+) + 3 H2O = sulfite + 3 NADPH + 4 H(+). Its pathway is sulfur metabolism; hydrogen sulfide biosynthesis; hydrogen sulfide from sulfite (NADPH route): step 1/1. Its function is as follows. Component of the sulfite reductase complex that catalyzes the 6-electron reduction of sulfite to sulfide. This is one of several activities required for the biosynthesis of L-cysteine from sulfate. This chain is Sulfite reductase [NADPH] hemoprotein beta-component, found in Zymomonas mobilis subsp. mobilis (strain ATCC 31821 / ZM4 / CP4).